A 344-amino-acid chain; its full sequence is L-threonine 3-dehydrogenase (344 aa).

Residue cysteine 38 participates in Zn(2+) binding. Catalysis depends on charge relay system residues threonine 40 and histidine 43. Zn(2+)-binding residues include histidine 63, glutamate 64, cysteine 93, cysteine 96, cysteine 99, and cysteine 107. Residues isoleucine 175, aspartate 195, arginine 200, 263-265, and 287-288 each bind NAD(+); these read LGI and IY.

Belongs to the zinc-containing alcohol dehydrogenase family. Homotetramer. Zn(2+) is required as a cofactor.

Its subcellular location is the cytoplasm. It catalyses the reaction L-threonine + NAD(+) = (2S)-2-amino-3-oxobutanoate + NADH + H(+). It functions in the pathway amino-acid degradation; L-threonine degradation via oxydo-reductase pathway; glycine from L-threonine: step 1/2. Functionally, catalyzes the NAD(+)-dependent oxidation of L-threonine to 2-amino-3-ketobutyrate. In Deinococcus deserti (strain DSM 17065 / CIP 109153 / LMG 22923 / VCD115), this protein is L-threonine 3-dehydrogenase.